We begin with the raw amino-acid sequence, 113 residues long: Virion membrane protein A21 homolog (113 aa).

Residues 1-23 (MFVLFLIVCYFILIFNIIVPKIA) traverse the membrane as a helical; Signal-anchor for type III membrane protein segment. At 24–113 (DKLRLEHEAF…CERAYTELFL (90 aa)) the chain is on the virion surface side.

The protein belongs to the chordopoxvirinae A21 family. Envelope protein part of a stable entry-fusion complex (EFC) which is at least composed of proteins A16, A21, A28, G3, G9, H2, J5, and L5. Formation of the viral membrane is necessary for the assembly of the complex. In terms of processing, contains two intramolecular disulfide bonds. They are created by the viral disulfide bond formation pathway, a poxvirus-specific pathway that operates on the cytoplasmic side of the MV membranes.

It localises to the virion membrane. Its function is as follows. Envelope protein part of the entry-fusion complex responsible for the virus membrane fusion with host cell membrane during virus entry. The protein is Virion membrane protein A21 homolog of Vertebrata (FPV).